Here is a 32-residue protein sequence, read N- to C-terminus: Photosystem II reaction center protein T (32 aa).

At Met1 the chain carries N-formylmethionine. Over Met1 to Glu2 the chain is Lumenal. The helical transmembrane segment at Thr3–Phe23 threads the bilayer. Residues Arg24 to Lys32 are Cytoplasmic-facing.

The protein belongs to the PsbT family. In terms of assembly, PSII is composed of 1 copy each of membrane proteins PsbA, PsbB, PsbC, PsbD, PsbE, PsbF, PsbH, PsbI, PsbJ, PsbK, PsbL, PsbM, PsbT, PsbX, PsbY, PsbZ, Psb30/Ycf12, PsbO, CyanoQ (PsbQ), PsbU, PsbV and a large number of cofactors. It forms dimeric complexes. Part of a photosystem II (PSII) assembly intermediate complex PSII-I; crystallized from a strain deleted of psbJ, it forms monomeric PSII before addition of the oxygen evolving complex. PSII-I includes 3 assembly factors not found in mature PSII (Psb27, Psb28 and Psb34). PSII binds multiple chlorophylls, carotenoids and specific lipids. serves as cofactor.

The protein localises to the cellular thylakoid membrane. Functionally, found at the monomer-monomer interface of the photosystem II (PS II) dimer, plays a role in assembly and dimerization of PSII. PSII is a light-driven water plastoquinone oxidoreductase, using light energy to abstract electrons from H(2)O, generating a proton gradient subsequently used for ATP formation. This chain is Photosystem II reaction center protein T, found in Thermosynechococcus vestitus (strain NIES-2133 / IAM M-273 / BP-1).